The chain runs to 160 residues: Ribosome maturation factor RimP (160 aa).

It belongs to the RimP family.

Its subcellular location is the cytoplasm. In terms of biological role, required for maturation of 30S ribosomal subunits. The polypeptide is Ribosome maturation factor RimP (Orientia tsutsugamushi (strain Ikeda) (Rickettsia tsutsugamushi)).